The sequence spans 297 residues: Carbamate kinase (297 aa).

Belongs to the carbamate kinase family.

It is found in the cytoplasm. The enzyme catalyses hydrogencarbonate + NH4(+) + ATP = carbamoyl phosphate + ADP + H2O + H(+). The catalysed reaction is carbamate + ATP = carbamoyl phosphate + ADP. It carries out the reaction hydrogencarbonate + NH4(+) = carbamate + H2O + H(+). The protein operates within nitrogen metabolism; (S)-allantoin degradation. In terms of biological role, kinase involved in the anaerobic nitrogen utilization via the assimilation of allantoin. Catalyzes the transfer of a phosphate group from carbamoyl phosphate to ADP to produce ATP and leave carbamate, which spontaneously hydrolyzes to ammonia and hydrogencarbonate. This Escherichia coli O157:H7 protein is Carbamate kinase.